Reading from the N-terminus, the 89-residue chain is Small ribosomal subunit protein uS15 (89 aa).

It belongs to the universal ribosomal protein uS15 family. As to quaternary structure, part of the 30S ribosomal subunit. Forms a bridge to the 50S subunit in the 70S ribosome, contacting the 23S rRNA.

In terms of biological role, one of the primary rRNA binding proteins, it binds directly to 16S rRNA where it helps nucleate assembly of the platform of the 30S subunit by binding and bridging several RNA helices of the 16S rRNA. Its function is as follows. Forms an intersubunit bridge (bridge B4) with the 23S rRNA of the 50S subunit in the ribosome. In Carboxydothermus hydrogenoformans (strain ATCC BAA-161 / DSM 6008 / Z-2901), this protein is Small ribosomal subunit protein uS15.